The primary structure comprises 206 residues: Urease accessory protein UreG (206 aa).

15–22 is a GTP binding site; the sequence is GPVGSGKT.

Belongs to the SIMIBI class G3E GTPase family. UreG subfamily. As to quaternary structure, homodimer. UreD, UreF and UreG form a complex that acts as a GTP-hydrolysis-dependent molecular chaperone, activating the urease apoprotein by helping to assemble the nickel containing metallocenter of UreC. The UreE protein probably delivers the nickel.

The protein resides in the cytoplasm. In terms of biological role, facilitates the functional incorporation of the urease nickel metallocenter. This process requires GTP hydrolysis, probably effectuated by UreG. This is Urease accessory protein UreG from Ralstonia pickettii (strain 12J).